The sequence spans 371 residues: MKFQLHCRDHEARRGTLTLAHGTVETPAFMPVGTYGAVKGLSPDELHTLGAGIILGNTFHLWLRPGLEVIGAHGGLHRLMNWDGPILTDSGGFQVFSLGALRKICEEGVRFRSPVNGDTCFLTPEESMRIQQVLNSDIVMIFDECTPYPVDMQIAESSMQLSLRWAERSKTAHAGNPNALFGIVQGGMYESLRDHSAAGLCAIGFDGYAIGGLSVGEPKADMQRILRHTAPQLPADKPRYLMGVGTPEDIVHAVAQGIDLFDCVLPTRNARNGWLYTSQGILRLRNSRYRLDTSPPDEHCDCYTCRHFTRAYLHHLQRTGEMLGARLNSLHNLHYYQRLMANIRKAIETGQFEQFARKFSGQDFMLKCASV.

Asp89 (proton acceptor) is an active-site residue. Substrate contacts are provided by residues 89–93 (DSGGF), Asp143, Gln185, and Gly212. The interval 243 to 249 (GVGTPED) is RNA binding. Asp262 functions as the Nucleophile in the catalytic mechanism. The RNA binding; important for wobble base 34 recognition stretch occupies residues 267-271 (TRNAR). Cys300, Cys302, Cys305, and His331 together coordinate Zn(2+).

It belongs to the queuine tRNA-ribosyltransferase family. As to quaternary structure, homodimer. Within each dimer, one monomer is responsible for RNA recognition and catalysis, while the other monomer binds to the replacement base PreQ1. Requires Zn(2+) as cofactor.

The catalysed reaction is 7-aminomethyl-7-carbaguanine + guanosine(34) in tRNA = 7-aminomethyl-7-carbaguanosine(34) in tRNA + guanine. The protein operates within tRNA modification; tRNA-queuosine biosynthesis. Catalyzes the base-exchange of a guanine (G) residue with the queuine precursor 7-aminomethyl-7-deazaguanine (PreQ1) at position 34 (anticodon wobble position) in tRNAs with GU(N) anticodons (tRNA-Asp, -Asn, -His and -Tyr). Catalysis occurs through a double-displacement mechanism. The nucleophile active site attacks the C1' of nucleotide 34 to detach the guanine base from the RNA, forming a covalent enzyme-RNA intermediate. The proton acceptor active site deprotonates the incoming PreQ1, allowing a nucleophilic attack on the C1' of the ribose to form the product. After dissociation, two additional enzymatic reactions on the tRNA convert PreQ1 to queuine (Q), resulting in the hypermodified nucleoside queuosine (7-(((4,5-cis-dihydroxy-2-cyclopenten-1-yl)amino)methyl)-7-deazaguanosine). The sequence is that of Queuine tRNA-ribosyltransferase from Nitrosomonas europaea (strain ATCC 19718 / CIP 103999 / KCTC 2705 / NBRC 14298).